A 707-amino-acid polypeptide reads, in one-letter code: Translation initiation factor IF-2 (707 aa).

The span at leucine 55–lysine 80 shows a compositional bias: basic and acidic residues. The segment at leucine 55–tyrosine 88 is disordered. Residues proline 209–lysine 378 form the tr-type G domain. A G1 region spans residues glycine 218–threonine 225. GTP is bound at residue glycine 218–threonine 225. The segment at glycine 243–histidine 247 is G2. Residues aspartate 264–glycine 267 are G3. GTP contacts are provided by residues aspartate 264–histidine 268 and asparagine 318–aspartate 321. The G4 stretch occupies residues asparagine 318–aspartate 321. The interval serine 354–lysine 356 is G5.

This sequence belongs to the TRAFAC class translation factor GTPase superfamily. Classic translation factor GTPase family. IF-2 subfamily.

The protein resides in the cytoplasm. In terms of biological role, one of the essential components for the initiation of protein synthesis. Protects formylmethionyl-tRNA from spontaneous hydrolysis and promotes its binding to the 30S ribosomal subunits. Also involved in the hydrolysis of GTP during the formation of the 70S ribosomal complex. The polypeptide is Translation initiation factor IF-2 (Caldanaerobacter subterraneus subsp. tengcongensis (strain DSM 15242 / JCM 11007 / NBRC 100824 / MB4) (Thermoanaerobacter tengcongensis)).